A 308-amino-acid chain; its full sequence is 4-hydroxy-3-methylbut-2-enyl diphosphate reductase (308 aa).

Residue C12 participates in [4Fe-4S] cluster binding. Residues H41 and H74 each coordinate (2E)-4-hydroxy-3-methylbut-2-enyl diphosphate. The dimethylallyl diphosphate site is built by H41 and H74. Isopentenyl diphosphate-binding residues include H41 and H74. A [4Fe-4S] cluster-binding site is contributed by C96. H124 is a (2E)-4-hydroxy-3-methylbut-2-enyl diphosphate binding site. Residue H124 participates in dimethylallyl diphosphate binding. An isopentenyl diphosphate-binding site is contributed by H124. The active-site Proton donor is the E126. A (2E)-4-hydroxy-3-methylbut-2-enyl diphosphate-binding site is contributed by T166. C196 contributes to the [4Fe-4S] cluster binding site. (2E)-4-hydroxy-3-methylbut-2-enyl diphosphate contacts are provided by S224, S225, N226, and S268. Dimethylallyl diphosphate-binding residues include S224, S225, N226, and S268. 4 residues coordinate isopentenyl diphosphate: S224, S225, N226, and S268.

The protein belongs to the IspH family. [4Fe-4S] cluster is required as a cofactor.

It catalyses the reaction isopentenyl diphosphate + 2 oxidized [2Fe-2S]-[ferredoxin] + H2O = (2E)-4-hydroxy-3-methylbut-2-enyl diphosphate + 2 reduced [2Fe-2S]-[ferredoxin] + 2 H(+). The catalysed reaction is dimethylallyl diphosphate + 2 oxidized [2Fe-2S]-[ferredoxin] + H2O = (2E)-4-hydroxy-3-methylbut-2-enyl diphosphate + 2 reduced [2Fe-2S]-[ferredoxin] + 2 H(+). Its pathway is isoprenoid biosynthesis; dimethylallyl diphosphate biosynthesis; dimethylallyl diphosphate from (2E)-4-hydroxy-3-methylbutenyl diphosphate: step 1/1. It participates in isoprenoid biosynthesis; isopentenyl diphosphate biosynthesis via DXP pathway; isopentenyl diphosphate from 1-deoxy-D-xylulose 5-phosphate: step 6/6. Catalyzes the conversion of 1-hydroxy-2-methyl-2-(E)-butenyl 4-diphosphate (HMBPP) into a mixture of isopentenyl diphosphate (IPP) and dimethylallyl diphosphate (DMAPP). Acts in the terminal step of the DOXP/MEP pathway for isoprenoid precursor biosynthesis. The polypeptide is 4-hydroxy-3-methylbut-2-enyl diphosphate reductase (Vesicomyosocius okutanii subsp. Calyptogena okutanii (strain HA)).